The following is a 615-amino-acid chain: Sodium-dependent dopamine transporter (615 aa).

The segment at 1-39 (MQLVPTDDPDEKIGRTSNGMQNATLPIDGPVNTEPKDPA) is disordered. The Cytoplasmic portion of the chain corresponds to 1 to 46 (MQLVPTDDPDEKIGRTSNGMQNATLPIDGPVNTEPKDPAREQWSGK). The segment covering 15–24 (RTSNGMQNAT) has biased composition (polar residues). Residues 47-72 (LDFLLSVVGFAVDLGNIWRFPYLCFK) form a helical membrane-spanning segment. Gly55, Ala57, Val58, and Asn62 together coordinate Na(+). Topologically, residues 73–76 (NGGG) are extracellular. Residues 77 to 100 (VFLIPYSIMVLLTGVPLFYMELCL) traverse the membrane as a helical segment. Topologically, residues 101 to 120 (GQYYRKGAITTWGRICPLFK) are cytoplasmic. The chain crosses the membrane as a helical span at residues 121-151 (GIGYCVILTAFYVDFFYNVILAWGLHYLYTS). The Extracellular portion of the chain corresponds to 152 to 229 (FSFNLPWASC…IRSVTDLGNV (78 aa)). Cys161 and Cys170 are oxidised to a cystine. Residues Asn162 and Asn187 are each glycosylated (N-linked (GlcNAc...) asparagine). Residues 230–250 (RWDIALSLFVVYLICYFSMWK) traverse the membrane as a helical segment. Topologically, residues 251 to 253 (GIH) are cytoplasmic. The chain crosses the membrane as a helical span at residues 254–278 (TSGKVVWFTALFPYVVLGILFIRGV). Topologically, residues 279–302 (TLPGWQNGIEYYLRPNFEMLKRPS) are extracellular. The helical transmembrane segment at 303-328 (VWQDAATQVFFSLGPGFGVLMAYSSY) threads the bilayer. Ser314 lines the Na(+) pocket. Topologically, residues 329–334 (NDFHNN) are cytoplasmic. The chain crosses the membrane as a helical span at residues 335–358 (VYVDALFTSFINCATSFLSGFVIF). Residue Asn346 coordinates Na(+). Residues 359-398 (SVLGYMSCKSGKPIEAVAQEGPGLVFVVYPEALSTMPYAP) are Extracellular-facing. A helical membrane pass occupies residues 399 to 424 (FWSVLFFLMLMTLGLDSSFGGSEAII). Na(+) contacts are provided by Leu411, Asp414, and Ser415. Over 425–439 (TGLSDEFPILKKNRE) the chain is Cytoplasmic. A helical transmembrane segment spans residues 440–460 (VFVGCLFAFYMVIGIAMCTEG). Residue Gly461 is a topological domain, extracellular. The helical transmembrane segment at 462-488 (ILIMEWLIIYGTTWGLLIAVFCEAMVI) threads the bilayer. Topologically, residues 489–518 (AYIYGLRQFVHDVKEMMGFRPGNYWKFCWS) are cytoplasmic. The chain crosses the membrane as a helical span at residues 519-541 (CAAPFILLSMITSNFINYQALTY). Topologically, residues 542–544 (QDY) are extracellular. A helical membrane pass occupies residues 545–565 (TYPTAANVIGIIFALSGASFI). Topologically, residues 566-615 (PLVGIYKFVNARGNTISEKWQRVTMPYRKRPNQTEYIPIPTTQPHSDIML) are cytoplasmic.

Belongs to the sodium:neurotransmitter symporter (SNF) (TC 2.A.22) family.

Its subcellular location is the cell membrane. Its function is as follows. Dopamine transporter. Terminates the action of dopamine by its high affinity sodium-dependent reuptake into presynaptic terminals. Plays a role in the learned avoidance behavior of animals exposed to food that induces mitochondrial stress. In Caenorhabditis elegans, this protein is Sodium-dependent dopamine transporter.